Reading from the N-terminus, the 236-residue chain is Small ribosomal subunit protein uS2c (236 aa).

It belongs to the universal ribosomal protein uS2 family.

The protein resides in the plastid. The protein is Small ribosomal subunit protein uS2c (rps2) of Cuscuta exaltata (Tall dodder).